The chain runs to 263 residues: tRNA uridine(34) hydroxylase (263 aa).

The Rhodanese domain maps to Glu-129–Tyr-223. Catalysis depends on Cys-183, which acts as the Cysteine persulfide intermediate.

The protein belongs to the TrhO family.

It catalyses the reaction uridine(34) in tRNA + AH2 + O2 = 5-hydroxyuridine(34) in tRNA + A + H2O. In terms of biological role, catalyzes oxygen-dependent 5-hydroxyuridine (ho5U) modification at position 34 in tRNAs. This is tRNA uridine(34) hydroxylase from Variovorax paradoxus (strain S110).